The chain runs to 95 residues: uncharacterized protein (95 aa).

This is an uncharacterized protein from Autographa californica nuclear polyhedrosis virus (AcMNPV).